A 276-amino-acid chain; its full sequence is Large ribosomal subunit protein uL2 (276 aa).

The disordered stretch occupies residues 223 to 276; that stretch reads GSAMNPVDHPHGGGEGKAPIGHPGPLTPWGKPTLGYKTRKKNKPSDKFIVKRRK. Over residues 265-276 the composition is skewed to basic and acidic residues; the sequence is KPSDKFIVKRRK.

Belongs to the universal ribosomal protein uL2 family. Part of the 50S ribosomal subunit. Forms a bridge to the 30S subunit in the 70S ribosome.

Functionally, one of the primary rRNA binding proteins. Required for association of the 30S and 50S subunits to form the 70S ribosome, for tRNA binding and peptide bond formation. It has been suggested to have peptidyltransferase activity; this is somewhat controversial. Makes several contacts with the 16S rRNA in the 70S ribosome. The protein is Large ribosomal subunit protein uL2 of Caldicellulosiruptor saccharolyticus (strain ATCC 43494 / DSM 8903 / Tp8T 6331).